The chain runs to 235 residues: MSNTPIELKGSSFTLSVVHLHEAEPEVIRQALEDKIAQAPAFLKHAPVVINVSGLESPVNWPELHKIVTSTGLRIIGVSGCKDTSLKVEIDRMGLPLLTEGKEKAVRPAPVEPATPSEPPQNANPITKTRLIDVPVRSGQRIYAPQCDLIVTSHVSAGAELIADGNIHVYGMMRGRALAGASGDREAQIFCTHLTAELVSIAGVYWLSDKIPAEFYGKAARLRLADNALTVQPLN.

Residues 104 to 125 are disordered; sequence KAVRPAPVEPATPSEPPQNANP. A compositionally biased stretch (pro residues) spans 110–119; it reads PVEPATPSEP.

The protein belongs to the MinC family. In terms of assembly, interacts with MinD and FtsZ.

Cell division inhibitor that blocks the formation of polar Z ring septums. Rapidly oscillates between the poles of the cell to destabilize FtsZ filaments that have formed before they mature into polar Z rings. Prevents FtsZ polymerization. This chain is Probable septum site-determining protein MinC, found in Salmonella enteritidis PT4 (strain P125109).